Consider the following 243-residue polypeptide: Probable transcriptional regulator ycf27 (243 aa).

In terms of domain architecture, Response regulatory spans lysine 7–leucine 120. Position 56 is a 4-aspartylphosphate (aspartate 56). Residues aspartate 76 to glycine 94 constitute a DNA-binding region (H-T-H motif). The ompR/PhoB-type DNA-binding region spans serine 135–arginine 236.

The protein resides in the plastid. It is found in the chloroplast. Its function is as follows. Probable promoter-specific protein mediating the interaction between DNA and RNA polymerase. The sequence is that of Probable transcriptional regulator ycf27 (ycf27) from Porphyra purpurea (Red seaweed).